We begin with the raw amino-acid sequence, 35 residues long: Alpha-amanitin proprotein (35 aa).

The propeptide occupies 1–10 (MSDINATRLP). Ile-11 is subject to (3R,4R)-4,5-dihydroxyisoleucine; in form alpha-amanitin. Residue Ile-11 is modified to (3R,4S)-4-hydroxyisoleucine; in form gamma-amanitin. The segment at residues 11 to 18 (IWGIGCNP) is a cross-link (cyclopeptide (Ile-Pro)). Residues 12–16 (WGIGC) constitute a cross-link (2'-cysteinyl-6'-hydroxytryptophan sulfoxide (Trp-Cys)). Pro-18 is subject to 4-hydroxyproline. A propeptide spanning residues 19-35 (CVGDDVTTLLTRGEALC) is cleaved from the precursor.

The protein belongs to the MSDIN fungal toxin family. Post-translationally, processed by the macrocyclase-peptidase enzyme POPB to yield a toxic cyclic decapeptide. POPB first removes 10 residues from the N-terminus. Conformational trapping of the remaining peptide forces the enzyme to release this intermediate rather than proceed to macrocyclization. The enzyme rebinds the remaining peptide in a different conformation and catalyzes macrocyclization of the N-terminal 8 residues.

In terms of biological role, major toxin belonging to the bicyclic octapeptides amatoxins that acts by binding non-competitively to RNA polymerase II and greatly slowing the elongation of transcripts from target promoters. The chain is Alpha-amanitin proprotein from Amanita bisporigera (Destroying angel).